Here is a 368-residue protein sequence, read N- to C-terminus: MVTGWHRPTWIEIDRAAIRENIKNEQNKLPESVDLWAVVKANAYGHGIIEVARTAKEAGAKGFCVAILDEALALREAGFQDDFILVLGATRKEDANLAAKNHISLTVFREDWLENLTLEATLRIHLKVDSGMGRLGIRTTEEARRIEATSTNDHQLQLEGIYTHFATADQLETSYFEQQLAKFQTILTSLKKRPTYVHTANSAASLLQPQIGFDAIRFGISMYGLTPSTEIKTSLPFELKPALALYTEMVHVKELAPGDSVSYGATYTATEREWVATLPIGYADGLIRHYSGFHVLVDGEPAPIIGRVCMDQTIIKLPREFQTGSKVTIIGKDHGNTVTADDAAQYLDTINYEVTCLLNERIPRKYIH.

K40 acts as the Proton acceptor; specific for D-alanine in catalysis. K40 carries the post-translational modification N6-(pyridoxal phosphate)lysine. R134 contributes to the substrate binding site. The active-site Proton acceptor; specific for L-alanine is the Y263. M310 contacts substrate.

It belongs to the alanine racemase family. Pyridoxal 5'-phosphate serves as cofactor.

It catalyses the reaction L-alanine = D-alanine. Its pathway is amino-acid biosynthesis; D-alanine biosynthesis; D-alanine from L-alanine: step 1/1. In terms of biological role, catalyzes the interconversion of L-alanine and D-alanine. May also act on other amino acids. The sequence is that of Alanine racemase (alr) from Listeria monocytogenes serotype 1/2a (strain 10403S).